Consider the following 396-residue polypeptide: Acetate kinase (396 aa).

A Mg(2+)-binding site is contributed by asparagine 7. Lysine 14 contributes to the ATP binding site. Arginine 88 is a binding site for substrate. Catalysis depends on aspartate 145, which acts as the Proton donor/acceptor. ATP is bound by residues histidine 205–glycine 209, aspartate 279–arginine 281, and glycine 327–asparagine 331. Glutamate 381 contributes to the Mg(2+) binding site.

Belongs to the acetokinase family. In terms of assembly, homodimer. Mg(2+) is required as a cofactor. Requires Mn(2+) as cofactor.

The protein resides in the cytoplasm. It carries out the reaction acetate + ATP = acetyl phosphate + ADP. Its pathway is metabolic intermediate biosynthesis; acetyl-CoA biosynthesis; acetyl-CoA from acetate: step 1/2. In terms of biological role, catalyzes the formation of acetyl phosphate from acetate and ATP. Can also catalyze the reverse reaction. This chain is Acetate kinase, found in Campylobacter jejuni subsp. jejuni serotype O:2 (strain ATCC 700819 / NCTC 11168).